A 376-amino-acid chain; its full sequence is tRNA-specific 2-thiouridylase MnmA (376 aa).

ATP is bound by residues 17 to 24 and Met-43; that span reads GMSGGVDS. Positions 103–105 are interaction with target base in tRNA; it reads NPD. Residue Cys-108 is the Nucleophile of the active site. Cysteines 108 and 204 form a disulfide. Gly-132 is an ATP binding site. The interval 154-156 is interaction with tRNA; it reads KDQ. The active-site Cysteine persulfide intermediate is Cys-204. An interaction with tRNA region spans residues 316–317; the sequence is RY.

It belongs to the MnmA/TRMU family.

It localises to the cytoplasm. It catalyses the reaction S-sulfanyl-L-cysteinyl-[protein] + uridine(34) in tRNA + AH2 + ATP = 2-thiouridine(34) in tRNA + L-cysteinyl-[protein] + A + AMP + diphosphate + H(+). Catalyzes the 2-thiolation of uridine at the wobble position (U34) of tRNA, leading to the formation of s(2)U34. This Pseudomonas savastanoi pv. phaseolicola (strain 1448A / Race 6) (Pseudomonas syringae pv. phaseolicola (strain 1448A / Race 6)) protein is tRNA-specific 2-thiouridylase MnmA.